Here is a 425-residue protein sequence, read N- to C-terminus: Formyl-CoA:oxalate CoA-transferase (425 aa).

Residues 17–18 (QS), arginine 38, 72–75 (LDTK), 96–98 (NFG), arginine 104, and 136–139 (KVYE) contribute to the CoA site. Aspartate 168 acts as the Nucleophile in catalysis. Position 247–249 (247–249 (GGQ)) interacts with substrate.

This sequence belongs to the CoA-transferase III family. Frc subfamily. In terms of assembly, homodimer.

It catalyses the reaction formyl-CoA + oxalate = oxalyl-CoA + formate. It functions in the pathway metabolic intermediate degradation; oxalate degradation; CO(2) and formate from oxalate: step 1/2. Functionally, involved in the catabolism of oxalate and in the adapatation to low pH via the induction of the oxalate-dependent acid tolerance response (ATR). Catalyzes the transfer of the CoA moiety from formyl-CoA to oxalate. The sequence is that of Formyl-CoA:oxalate CoA-transferase from Rhodopseudomonas palustris (strain ATCC BAA-98 / CGA009).